The primary structure comprises 178 residues: Ribosome maturation factor RimM (178 aa).

The region spanning 99–178 (EGDFYWHDLI…TIEVDWDAGF (80 aa)) is the PRC barrel domain.

This sequence belongs to the RimM family. In terms of assembly, binds ribosomal protein uS19.

Its subcellular location is the cytoplasm. An accessory protein needed during the final step in the assembly of 30S ribosomal subunit, possibly for assembly of the head region. Essential for efficient processing of 16S rRNA. May be needed both before and after RbfA during the maturation of 16S rRNA. It has affinity for free ribosomal 30S subunits but not for 70S ribosomes. The polypeptide is Ribosome maturation factor RimM (Mannheimia succiniciproducens (strain KCTC 0769BP / MBEL55E)).